The sequence spans 175 residues: Large ribosomal subunit protein uL15 (175 aa).

2 disordered regions span residues 1–65 (MSTL…LPKF) and 155–175 (PESA…QPKA). Basic residues predominate over residues 12–21 (RSWHRKKRVG). Over residues 22-38 (RGQGSGLGKTAGRGGKG) the composition is skewed to gly residues. The segment covering 160–169 (KAHAGKGVKA) has biased composition (low complexity).

It belongs to the universal ribosomal protein uL15 family. As to quaternary structure, part of the 50S ribosomal subunit.

Its function is as follows. Binds to the 23S rRNA. In Myxococcus xanthus (strain DK1622), this protein is Large ribosomal subunit protein uL15.